The primary structure comprises 461 residues: Glycine--tRNA ligase (461 aa).

Residues Arg100 and Glu163 each contribute to the substrate site. ATP-binding positions include 195–197 (RNE), 205–210 (FRTREF), 282–283 (EL), and 326–329 (GLGR). Residue 210–214 (FEQME) coordinates substrate. Residue 322-326 (EPAAG) participates in substrate binding.

Belongs to the class-II aminoacyl-tRNA synthetase family. In terms of assembly, homodimer.

The protein resides in the cytoplasm. The catalysed reaction is tRNA(Gly) + glycine + ATP = glycyl-tRNA(Gly) + AMP + diphosphate. Functionally, catalyzes the attachment of glycine to tRNA(Gly). This chain is Glycine--tRNA ligase, found in Corynebacterium glutamicum (strain ATCC 13032 / DSM 20300 / JCM 1318 / BCRC 11384 / CCUG 27702 / LMG 3730 / NBRC 12168 / NCIMB 10025 / NRRL B-2784 / 534).